Here is a 217-residue protein sequence, read N- to C-terminus: MRAPASSAASNRPGPSNHPTPRWNSKQFFLTYPHCNLTPSELMKELFSRLTEKIPGYIKVSQEFHKDGDPHLHVLIQLNTKLCTRNPKFFDVQGFHPNIQPVRDAEKVFGYISKTNGDSDEMGELQLRIKKPEKPTRDQRMAMIIASSTNRNEYLSMVRKEFPFDWAIRLQQFEYSAAALFTEPPPVYQSPFPNEQIVCPPELVDIIDQEWNQVTTD.

Over residues 1–17 (MRAPASSAASNRPGPSN) the composition is skewed to low complexity. The tract at residues 1-22 (MRAPASSAASNRPGPSNHPTPR) is disordered. Positions 22–125 (RWNSKQFFLT…NGDSDEMGEL (104 aa)) constitute a CRESS-DNA virus Rep endonuclease domain. The RCR-1 motif lies at 29-32 (FLTY). The a divalent metal cation site is built by Glu63, His71, and His73. The RCR-2 signature appears at 71 to 73 (HLH). The For DNA cleavage activity role is filled by Tyr111. The RCR-3 signature appears at 111 to 114 (YISK). The tract at residues 176–188 (SAAALFTEPPPVY) is oligomerization.

It belongs to the geminiviridae Rep protein family. Homooligomer. Part of the C- and V-complexes which are RepA-Rep-DNA complexes involved in the c-sense and v-sense transcription.

It is found in the host nucleus. The protein localises to the host cytoplasm. Implicated in enhancement of V-sense gene expression. Acts a an inhibitor of C-sense gene transcription. The chain is Replication-associated protein A from Miscanthus sacchariflorus (MiSV).